We begin with the raw amino-acid sequence, 692 residues long: Elongation factor G (692 aa).

A tr-type G domain is found at 8-282 (EKTRNIGIMA…GVVDYLPSPV (275 aa)). Residues 17–24 (AHIDAGKT), 81–85 (DTPGH), and 135–138 (NKMD) each bind GTP.

It belongs to the TRAFAC class translation factor GTPase superfamily. Classic translation factor GTPase family. EF-G/EF-2 subfamily.

It is found in the cytoplasm. Its function is as follows. Catalyzes the GTP-dependent ribosomal translocation step during translation elongation. During this step, the ribosome changes from the pre-translocational (PRE) to the post-translocational (POST) state as the newly formed A-site-bound peptidyl-tRNA and P-site-bound deacylated tRNA move to the P and E sites, respectively. Catalyzes the coordinated movement of the two tRNA molecules, the mRNA and conformational changes in the ribosome. This Geobacillus kaustophilus (strain HTA426) protein is Elongation factor G.